A 550-amino-acid polypeptide reads, in one-letter code: Arginine--tRNA ligase (550 aa).

Residues 130 to 140 (ANPTGPIHLGG) carry the 'HIGH' region motif.

It belongs to the class-I aminoacyl-tRNA synthetase family. As to quaternary structure, monomer.

It is found in the cytoplasm. The enzyme catalyses tRNA(Arg) + L-arginine + ATP = L-arginyl-tRNA(Arg) + AMP + diphosphate. The polypeptide is Arginine--tRNA ligase (Corynebacterium efficiens (strain DSM 44549 / YS-314 / AJ 12310 / JCM 11189 / NBRC 100395)).